We begin with the raw amino-acid sequence, 96 residues long: Small ribosomal subunit protein bS6c (96 aa).

This sequence belongs to the bacterial ribosomal protein bS6 family.

Its subcellular location is the plastid. It is found in the chloroplast. Functionally, binds together with bS18 to 16S ribosomal RNA. This chain is Small ribosomal subunit protein bS6c (rps6), found in Guillardia theta (Cryptophyte).